Here is a 561-residue protein sequence, read N- to C-terminus: Ankyrin repeat protein OPG189 (561 aa).

7 ANK repeats span residues 68–98 (YGEN…NINK), 172–208 (YGCT…DVDK), 212–242 (YGNT…NIDS), 246–275 (NGYT…NVNA), 279–307 (FGTT…ELEI), 342–371 (YNET…DFET), and 375–404 (SGCT…SLKI).

The protein belongs to the orthopoxvirus OPG189 protein family.

Functionally, contributes to viral release without involving rearrangement of host actin. The chain is Ankyrin repeat protein OPG189 (OPG189) from Cynomys gunnisoni (Gunnison's prairie dog).